The following is a 142-amino-acid chain: Large ribosomal subunit protein uL13 (142 aa).

This sequence belongs to the universal ribosomal protein uL13 family. As to quaternary structure, part of the 50S ribosomal subunit.

This protein is one of the early assembly proteins of the 50S ribosomal subunit, although it is not seen to bind rRNA by itself. It is important during the early stages of 50S assembly. The sequence is that of Large ribosomal subunit protein uL13 from Shewanella baltica (strain OS223).